The chain runs to 399 residues: Putative 3'-5' exonuclease R431 (399 aa).

One can recognise a 3'-5' exonuclease domain in the interval 118 to 297; sequence FQIVDNWIEN…IYNELQLMTN (180 aa). The region spanning 335–399 is the R3H domain; it reads ERRLKSIESK…NKYVIITRHC (65 aa).

In Acanthamoeba polyphaga (Amoeba), this protein is Putative 3'-5' exonuclease R431.